The following is a 335-amino-acid chain: Glutamyl-tRNA reductase (335 aa).

Residues 60–63, Ser110, 115–117, and Gln121 each bind substrate; these read TCHR and ETE. Cys61 functions as the Nucleophile in the catalytic mechanism. 189–194 is a binding site for NADP(+); it reads GYSEIN.

It belongs to the glutamyl-tRNA reductase family. Homodimer.

The enzyme catalyses (S)-4-amino-5-oxopentanoate + tRNA(Glu) + NADP(+) = L-glutamyl-tRNA(Glu) + NADPH + H(+). It participates in porphyrin-containing compound metabolism; protoporphyrin-IX biosynthesis; 5-aminolevulinate from L-glutamyl-tRNA(Glu): step 1/2. Catalyzes the NADPH-dependent reduction of glutamyl-tRNA(Glu) to glutamate 1-semialdehyde (GSA). The polypeptide is Glutamyl-tRNA reductase (Chlamydia trachomatis serovar D (strain ATCC VR-885 / DSM 19411 / UW-3/Cx)).